A 516-amino-acid chain; its full sequence is NAD(P)H-quinone oxidoreductase chain 4, chloroplastic (516 aa).

The next 14 helical transmembrane spans lie at 4 to 24 (FPWL…IFLL), 37 to 57 (LCIC…HFQL), 87 to 107 (IGPI…AWPV), 111 to 131 (AQLF…SFSS), 134 to 154 (LLLF…LLSM), 167 to 187 (FILY…GIGL), 208 to 228 (ALEV…LPII), 242 to 262 (HYST…YGLV), 272 to 292 (AHCL…IYAA), 305 to 325 (IAYS…SLSD), 330 to 350 (GAIL…FLAG), 386 to 406 (LALP…GIIT), 416 to 436 (ILIA…SLSM), and 462 to 482 (LFVS…PDFV).

Belongs to the complex I subunit 4 family.

The protein localises to the plastid. It is found in the chloroplast thylakoid membrane. It carries out the reaction a plastoquinone + NADH + (n+1) H(+)(in) = a plastoquinol + NAD(+) + n H(+)(out). It catalyses the reaction a plastoquinone + NADPH + (n+1) H(+)(in) = a plastoquinol + NADP(+) + n H(+)(out). The protein is NAD(P)H-quinone oxidoreductase chain 4, chloroplastic of Oenothera argillicola (Appalachian evening primrose).